Here is a 616-residue protein sequence, read N- to C-terminus: Chaperone protein HscA homolog (616 aa).

Belongs to the heat shock protein 70 family.

Functionally, chaperone involved in the maturation of iron-sulfur cluster-containing proteins. Has a low intrinsic ATPase activity which is markedly stimulated by HscB. This Tolumonas auensis (strain DSM 9187 / NBRC 110442 / TA 4) protein is Chaperone protein HscA homolog.